We begin with the raw amino-acid sequence, 62 residues long: Protein CYSTEINE-RICH TRANSMEMBRANE MODULE 2 (62 aa).

2 helical membrane passes run 23-39 (VAVA…AAFD) and 33-53 (VVAA…LSLI).

Belongs to the CYSTM1 family. In terms of assembly, heterodimers. Binds weakly to CYSTM7 and WIH1/CYSTM13. In terms of tissue distribution, mostly expressed in stems, siliques, leaves and flowers and, to a lower extent, in roots.

It localises to the cell membrane. The protein localises to the nucleus. It is found in the secreted. Its subcellular location is the cell wall. In terms of biological role, involved in resistance to abiotic stress. Its function is as follows. Confers resistance to heavy metal ions (e.g. cadmium (CdCl(2)) and copper (CuCl(2))) by chelating them at the plasma membrane of root cells, thus stopping their entry and reducing their accumulation. This is Protein CYSTEINE-RICH TRANSMEMBRANE MODULE 2 from Arabidopsis thaliana (Mouse-ear cress).